The primary structure comprises 402 residues: 4-hydroxy-3-methylbut-2-enyl diphosphate reductase (402 aa).

[4Fe-4S] cluster is bound at residue C66. H96 contacts (2E)-4-hydroxy-3-methylbut-2-enyl diphosphate. H96 contributes to the dimethylallyl diphosphate binding site. H96 is a binding site for isopentenyl diphosphate. Residue C157 coordinates [4Fe-4S] cluster. A (2E)-4-hydroxy-3-methylbut-2-enyl diphosphate-binding site is contributed by H185. H185 provides a ligand contact to dimethylallyl diphosphate. H185 contacts isopentenyl diphosphate. E187 functions as the Proton donor in the catalytic mechanism. T250 is a binding site for (2E)-4-hydroxy-3-methylbut-2-enyl diphosphate. [4Fe-4S] cluster is bound at residue C288. 4 residues coordinate (2E)-4-hydroxy-3-methylbut-2-enyl diphosphate: S317, S318, N319, and S379. Dimethylallyl diphosphate contacts are provided by S317, S318, N319, and S379. Isopentenyl diphosphate is bound by residues S317, S318, N319, and S379.

The protein belongs to the IspH family. Requires [4Fe-4S] cluster as cofactor.

The catalysed reaction is isopentenyl diphosphate + 2 oxidized [2Fe-2S]-[ferredoxin] + H2O = (2E)-4-hydroxy-3-methylbut-2-enyl diphosphate + 2 reduced [2Fe-2S]-[ferredoxin] + 2 H(+). It catalyses the reaction dimethylallyl diphosphate + 2 oxidized [2Fe-2S]-[ferredoxin] + H2O = (2E)-4-hydroxy-3-methylbut-2-enyl diphosphate + 2 reduced [2Fe-2S]-[ferredoxin] + 2 H(+). The protein operates within isoprenoid biosynthesis; dimethylallyl diphosphate biosynthesis; dimethylallyl diphosphate from (2E)-4-hydroxy-3-methylbutenyl diphosphate: step 1/1. It functions in the pathway isoprenoid biosynthesis; isopentenyl diphosphate biosynthesis via DXP pathway; isopentenyl diphosphate from 1-deoxy-D-xylulose 5-phosphate: step 6/6. Functionally, catalyzes the conversion of 1-hydroxy-2-methyl-2-(E)-butenyl 4-diphosphate (HMBPP) into a mixture of isopentenyl diphosphate (IPP) and dimethylallyl diphosphate (DMAPP). Acts in the terminal step of the DOXP/MEP pathway for isoprenoid precursor biosynthesis. This Crocosphaera subtropica (strain ATCC 51142 / BH68) (Cyanothece sp. (strain ATCC 51142)) protein is 4-hydroxy-3-methylbut-2-enyl diphosphate reductase.